The following is a 279-amino-acid chain: MQKAGLLLRGWTRAWKSVRMASSGLTRQNPLANKVALVTASTDGIGLAIARRLAEDGAHVVISSRKQQNVDRAVATLQGEGLSVTGVVCHVGKAEDREKLVNMALKLHQGIDILVSNAAVNPFFGNLMDVTEEVWNKVLSINVTASAMMIKAVVPAMEKRGGGSVVIVSSVAGFVLFPSLGPYNVSKTALLGLTKNFAAELAPKNIRVNCLAPGLIKTHFSSVLWKEKAREEMIKETMQIRRLGKPEDCVGIVSFLCSEDASYINGETVVVGGGTPSRL.

Position 37 to 61 (37 to 61 (LVTASTDGIGLAIARRLAEDGAHVV)) interacts with NADP(+). The residue at position 93 (lysine 93) is an N6-acetyllysine; alternate. Lysine 93 carries the post-translational modification N6-succinyllysine; alternate. N6-acetyllysine is present on lysine 106. Serine 170 provides a ligand contact to substrate. Residue tyrosine 183 is the Proton acceptor of the active site. Lysine 187 contacts NADP(+). Position 217 is an N6-acetyllysine; alternate (lysine 217). Position 217 is an N6-succinyllysine; alternate (lysine 217). Serine 221 carries the post-translational modification Phosphoserine. Residues lysine 228 and lysine 235 each carry the N6-succinyllysine modification. A Peroxisomal targeting signal motif is present at residues 277-279 (SRL).

It belongs to the short-chain dehydrogenases/reductases (SDR) family. As to quaternary structure, homotetramer.

It is found in the peroxisome. The enzyme catalyses a secondary alcohol + NADP(+) = a ketone + NADPH + H(+). The catalysed reaction is 3alpha-hydroxy-5beta-pregnan-20-one + NADP(+) = 5beta-pregnan-3,20-dione + NADPH + H(+). It catalyses the reaction 5beta-dihydrotestosterone + NADPH + H(+) = 5beta-androstane-3alpha,17beta-diol + NADP(+). It carries out the reaction all-trans-retinol + NADP(+) = all-trans-retinal + NADPH + H(+). The enzyme catalyses isatin + NADPH + H(+) = 3-hydroxyindolin-2-one + NADP(+). NADPH-dependent oxidoreductase which catalyzes the reduction of a variety of compounds bearing carbonyl groups including ketosteroids, alpha-dicarbonyl compounds, aldehydes, aromatic ketones and quinones. Reduces all-trans-retinal and 9-cis retinal. Reduces 3-ketosteroids and benzil into 3alpha-hydroxysteroids and S-benzoin, respectively, in contrast to the stereoselectivity of primates DHRS4s which produce 3beta-hydroxysteroids and R-benzoin. In the reverse reaction, catalyzes the NADP-dependent oxidation of 3alpha-hydroxysteroids and alcohol, but with much lower efficiency. Involved in the metabolism of 3alpha-hydroxysteroids, retinoid, isatin and xenobiotic carbonyl compounds. The sequence is that of Dehydrogenase/reductase SDR family member 4 (Dhrs4) from Rattus norvegicus (Rat).